Here is a 296-residue protein sequence, read N- to C-terminus: Phosphoribosylaminoimidazole-succinocarboxamide synthase (296 aa).

The protein belongs to the SAICAR synthetase family.

It carries out the reaction 5-amino-1-(5-phospho-D-ribosyl)imidazole-4-carboxylate + L-aspartate + ATP = (2S)-2-[5-amino-1-(5-phospho-beta-D-ribosyl)imidazole-4-carboxamido]succinate + ADP + phosphate + 2 H(+). Its pathway is purine metabolism; IMP biosynthesis via de novo pathway; 5-amino-1-(5-phospho-D-ribosyl)imidazole-4-carboxamide from 5-amino-1-(5-phospho-D-ribosyl)imidazole-4-carboxylate: step 1/2. This chain is Phosphoribosylaminoimidazole-succinocarboxamide synthase, found in Syntrophotalea carbinolica (strain DSM 2380 / NBRC 103641 / GraBd1) (Pelobacter carbinolicus).